The primary structure comprises 610 residues: Putative protein tag-250 (610 aa).

Tudor domains are found at residues 149-260 and 386-506; these read VALK…LLPP and MPMS…KIGG.

In Caenorhabditis elegans, this protein is Putative protein tag-250 (tag-250).